The primary structure comprises 139 residues: Large-conductance mechanosensitive channel (139 aa).

The next 2 helical transmembrane spans lie at 9 to 29 (AFAV…GAAF) and 79 to 99 (IQTV…VKAI).

This sequence belongs to the MscL family. In terms of assembly, homopentamer.

The protein resides in the cell inner membrane. In terms of biological role, channel that opens in response to stretch forces in the membrane lipid bilayer. May participate in the regulation of osmotic pressure changes within the cell. This is Large-conductance mechanosensitive channel from Pseudomonas putida (strain ATCC 47054 / DSM 6125 / CFBP 8728 / NCIMB 11950 / KT2440).